The chain runs to 363 residues: Ethanolamine kinase 1 (363 aa).

This sequence belongs to the choline/ethanolamine kinase family.

It is found in the cytoplasm. It carries out the reaction ethanolamine + ATP = phosphoethanolamine + ADP + H(+). Its pathway is phospholipid metabolism; phosphatidylethanolamine biosynthesis; phosphatidylethanolamine from ethanolamine: step 1/3. Functionally, highly specific for ethanolamine phosphorylation. May be a rate-controlling step in phosphatidylethanolamine biosynthesis. The protein is Ethanolamine kinase 1 (Etnk1) of Mus musculus (Mouse).